The chain runs to 319 residues: UDP-N-acetylenolpyruvoylglucosamine reductase (319 aa).

Residues 35 to 198 form the FAD-binding PCMH-type domain; the sequence is VGGPAEAMFK…TGCVLAGRPD (164 aa). The active site involves R178. S227 serves as the catalytic Proton donor. E302 is an active-site residue.

It belongs to the MurB family. It depends on FAD as a cofactor.

It localises to the cytoplasm. It catalyses the reaction UDP-N-acetyl-alpha-D-muramate + NADP(+) = UDP-N-acetyl-3-O-(1-carboxyvinyl)-alpha-D-glucosamine + NADPH + H(+). Its pathway is cell wall biogenesis; peptidoglycan biosynthesis. Functionally, cell wall formation. The protein is UDP-N-acetylenolpyruvoylglucosamine reductase of Rhodospirillum rubrum (strain ATCC 11170 / ATH 1.1.1 / DSM 467 / LMG 4362 / NCIMB 8255 / S1).